The sequence spans 759 residues: Phosphoribosylformylglycinamidine synthase subunit PurL (759 aa).

The active site involves His61. Residues Tyr64 and Lys105 each coordinate ATP. Glu107 contributes to the Mg(2+) binding site. Substrate-binding positions include 108–111 (SHNH) and Arg130. His109 (proton acceptor) is an active-site residue. Asp131 is a Mg(2+) binding site. Gln260 is a substrate binding site. Asp288 is a binding site for Mg(2+). 332-334 (ESQ) serves as a coordination point for substrate. ATP is bound by residues Asp520 and Gly557. A Mg(2+)-binding site is contributed by Asn558. Residue Ser560 participates in substrate binding.

This sequence belongs to the FGAMS family. Monomer. Part of the FGAM synthase complex composed of 1 PurL, 1 PurQ and 2 PurS subunits.

The protein localises to the cytoplasm. It carries out the reaction N(2)-formyl-N(1)-(5-phospho-beta-D-ribosyl)glycinamide + L-glutamine + ATP + H2O = 2-formamido-N(1)-(5-O-phospho-beta-D-ribosyl)acetamidine + L-glutamate + ADP + phosphate + H(+). The protein operates within purine metabolism; IMP biosynthesis via de novo pathway; 5-amino-1-(5-phospho-D-ribosyl)imidazole from N(2)-formyl-N(1)-(5-phospho-D-ribosyl)glycinamide: step 1/2. Its function is as follows. Part of the phosphoribosylformylglycinamidine synthase complex involved in the purines biosynthetic pathway. Catalyzes the ATP-dependent conversion of formylglycinamide ribonucleotide (FGAR) and glutamine to yield formylglycinamidine ribonucleotide (FGAM) and glutamate. The FGAM synthase complex is composed of three subunits. PurQ produces an ammonia molecule by converting glutamine to glutamate. PurL transfers the ammonia molecule to FGAR to form FGAM in an ATP-dependent manner. PurS interacts with PurQ and PurL and is thought to assist in the transfer of the ammonia molecule from PurQ to PurL. The sequence is that of Phosphoribosylformylglycinamidine synthase subunit PurL from Thermoplasma volcanium (strain ATCC 51530 / DSM 4299 / JCM 9571 / NBRC 15438 / GSS1).